The primary structure comprises 380 residues: Deoxyguanosinetriphosphate triphosphohydrolase-like protein (380 aa).

The HD domain maps to 79 to 196 (RLTHTLEVQQ…VDAADALAYT (118 aa)).

It belongs to the dGTPase family. Type 2 subfamily.

The polypeptide is Deoxyguanosinetriphosphate triphosphohydrolase-like protein (Deinococcus deserti (strain DSM 17065 / CIP 109153 / LMG 22923 / VCD115)).